We begin with the raw amino-acid sequence, 581 residues long: DNA primase (581 aa).

A CHC2-type zinc finger spans residues 40–64 (CPFHNEKTPSFTVNGEKQFYHCFGC). The Toprim domain occupies 259–341 (NRLLVVEGYM…GRQLRFMFLP (83 aa)). Mg(2+) contacts are provided by Glu-265, Asp-309, and Asp-311.

This sequence belongs to the DnaG primase family. Monomer. Interacts with DnaB. Requires Zn(2+) as cofactor. It depends on Mg(2+) as a cofactor.

The catalysed reaction is ssDNA + n NTP = ssDNA/pppN(pN)n-1 hybrid + (n-1) diphosphate.. Functionally, RNA polymerase that catalyzes the synthesis of short RNA molecules used as primers for DNA polymerase during DNA replication. This is DNA primase from Escherichia coli O6:H1 (strain CFT073 / ATCC 700928 / UPEC).